The chain runs to 346 residues: MAEITAKLVKELREKSGAGVMDAKKALVETDGDMDKAVELLREKGMAKAAKKADRVAAEGLTGVYVHGNVAAVVEVNAETDFVAKNAQFVELVNATAKVIAEGKPANNDEALALVMPSGETLAEAYVNATATIGEKISFRRFALIEKADEQHFGAYQHNGGRIGVISVVEGGDDALAKQVSMHIAAMKPTVLSYTELDAQFIKDELAQLNHAIELDNESRAMVDKPALPFLKYGSKAQLSDDVITAAEADIKAELAAEGKPEKIWDKIIPGKMDRFMLDNTKVDQAYTLLAQVYIMDDSKTVEAYLDSVNAKAIAFARFEVGEGIEKKANDFESEVAATMAAALNN.

The tract at residues 80-83 is involved in Mg(2+) ion dislocation from EF-Tu; that stretch reads TDFV.

This sequence belongs to the EF-Ts family.

It is found in the cytoplasm. Functionally, associates with the EF-Tu.GDP complex and induces the exchange of GDP to GTP. It remains bound to the aminoacyl-tRNA.EF-Tu.GTP complex up to the GTP hydrolysis stage on the ribosome. The chain is Elongation factor Ts from Streptococcus pyogenes serotype M1.